The primary structure comprises 259 residues: Ribonuclease HII (259 aa).

In terms of domain architecture, RNase H type-2 spans 70-258; that stretch reads TLIAGIDEVG…VKSLVLGKKE (189 aa). A divalent metal cation-binding residues include Asp76, Glu77, and Asp168.

This sequence belongs to the RNase HII family. The cofactor is Mn(2+). Mg(2+) is required as a cofactor.

The protein resides in the cytoplasm. It catalyses the reaction Endonucleolytic cleavage to 5'-phosphomonoester.. Endonuclease that specifically degrades the RNA of RNA-DNA hybrids. The chain is Ribonuclease HII from Streptococcus pneumoniae (strain P1031).